An 8903-amino-acid polypeptide reads, in one-letter code: Nonribosomal peptide synthetase vlms (8903 aa).

One can recognise a Carrier 1 domain in the interval 11–84; the sequence is GSCRTTLGKV…ELADSIDEQN (74 aa). Positions 13 to 81 are thiolation (T) domain 1; it reads CRTTLGKVAA…TLAELADSID (69 aa). S45 carries the post-translational modification O-(pantetheine 4'-phosphoryl)serine. 2 adenylation (A) domain regions span residues 59–736 and 989–1386; these read GIWV…SHLP and MAAQ…IKIR. Residues 572-953 are condensation (C) domain 1; sequence VPHQLDTEKL…FLLDGVNMSI (382 aa). The Carrier 2 domain maps to 1524–1600; it reads SSMSTVEQEL…QLALAAESQA (77 aa). Residues 1529 to 1597 are thiolation (T) domain 2; the sequence is VEQELRQIWS…TIPQLALAAE (69 aa). An O-(pantetheine 4'-phosphoryl)serine modification is found at S1561. Residues 1613-2050 are epimerase (E) domain 1; it reads FPLSPIQKMY…TVKELAAVSA (438 aa). The interval 2091–2523 is condensation (C) domain 2; sequence DILPCSPIQQ…LLSVSEENKL (433 aa). The tract at residues 2546 to 2943 is adenylation (A) domain 2; that stretch reads MSSHADATAI…GRQDSQVKIR (398 aa). The 77-residue stretch at 3084 to 3160 folds into the Carrier 3 domain; that stretch reads LFTTAIERQL…ELALQAKMVD (77 aa). The tract at residues 3089–3157 is thiolation (T) domain 3; that stretch reads IERQLRQVWS…TIPELALQAK (69 aa). O-(pantetheine 4'-phosphoryl)serine is present on S3121. Residues 3174–3614 are epimerase (E) domain 2; sequence FALSPIQQMY…AIKSLVEELM (441 aa). Residues 3655-4093 form a condensation (C) domain 3 region; the sequence is EDILPCSPMQ…LMSTKDIQQL (439 aa). The adenylation (A) domain 3 stretch occupies residues 4114–4512; sequence ERLNTQPESM…GRIDTQIKIR (399 aa). The Carrier 4 domain occupies 4649-4725; the sequence is APRTTMEKKL…DLAEATELKC (77 aa). Residues 4654-4722 form a thiolation (T) domain 4 region; that stretch reads MEKKLRDLFA…ILADLAEATE (69 aa). Residue S4686 is modified to O-(pantetheine 4'-phosphoryl)serine. The segment at 4775–5191 is condensation (C) domain 4; that stretch reads EDVYPCSPLQ…AQLQMLSEED (417 aa). The tract at residues 5216 to 5614 is adenylation (A) domain 4; sequence ETMTSQPDAP…GRRDTQVKIR (399 aa). The region spanning 5753 to 5829 is the Carrier 5 domain; that stretch reads APTTAMEKRL…DLAQELEQRH (77 aa). Residues 5758–5826 form a thiolation (T) domain 5 region; the sequence is MEKRLQNLFC…RLGDLAQELE (69 aa). The residue at position 5790 (S5790) is an O-(pantetheine 4'-phosphoryl)serine. E5875 is a region of interest (condensation (C) domain 5). The adenylation (A) domain 5 stretch occupies residues 6311 to 6702; the sequence is EEQMSLRPSE…GRMDGQIKIR (392 aa). One can recognise a Carrier 6 domain in the interval 6836–6912; it reads SSATNTERQL…ELAATLEVMD (77 aa). The thiolation (T) domain 6 stretch occupies residues 6841 to 6909; sequence TERQLRQIWS…TIPELAATLE (69 aa). S6873 is subject to O-(pantetheine 4'-phosphoryl)serine. The tract at residues 6923 to 7349 is epimerase (E) domain 3; sequence GFFELSPIQR…YGRTIKTLVE (427 aa). The condensation (C) domain 6 stretch occupies residues 7391–7823; that stretch reads EDILPCSPIQ…LVLTNDEAQI (433 aa). The interval 7844 to 8240 is adenylation (A) domain 6; sequence EQMARKPEAQ…LDRIGTQVKI (397 aa). The region spanning 8368-8444 is the Carrier 7 domain; it reads APISATEAVF…AMAACVSDVS (77 aa). Residues 8369–8441 form a thiolation (T) domain 7 region; the sequence is PISATEAVFC…VLHAMAACVS (73 aa). S8405 bears the O-(pantetheine 4'-phosphoryl)serine mark. Residues 8482-8897 are condensation (C) domain 7; the sequence is DVLPTTEFQT…MENPRSTVGH (416 aa).

Belongs to the NRP synthetase family.

Its pathway is secondary metabolite biosynthesis. Its function is as follows. Nonribosomal peptide synthetase; part of the gene cluster that mediates the biosynthesis of verlamelin, a lipopeptide that exhibits antifungal activity against plant pathogenic fungi. Verlamelin is a cyclic hexadepsipeptide and is bridged by ester bonding between a 5-hydroxytetradecanoic acid moiety and a carboxyl group on the terminal Val of amide-bonded tetradecanoyl-hexapeptide D-allo-Thr-D-Ala-L-Pro-L-Gln-D-Tyr-L-Val. VlmA and vlmB are altogether regarded as essential components in the biosynthesis of 5-hydroxytetradecanoic acid. VlmA catalyzes the hydroxylation at position C5 of tetradecanoic acid produced in primary metabolism, while the precise function of vlmB still remains to be solved. To be loaded onto the waiting NRPS, 5-hydroxytetradecanoic acid is activated in the form of acyladenylate by the AMP-dependent ligase vlmC. VlmS seems to accept the fatty-acyl intermediate onto the initial module to further elongate amino acid residues by the downstream modules. In addition, in the last module at its C-terminus, vlmS contains a surplus condensation (C) domain that may be involved in cyclization, the last step to form verlamelin. This chain is Nonribosomal peptide synthetase vlms, found in Lecanicillium sp.